The primary structure comprises 491 residues: Malonate-semialdehyde dehydrogenase 1 (491 aa).

The NAD(+) site is built by alanine 154, phenylalanine 156, lysine 180, glutamate 183, arginine 184, serine 233, and threonine 255. The active-site Nucleophile is cysteine 288. Glutamate 386 lines the NAD(+) pocket.

This sequence belongs to the aldehyde dehydrogenase family. IolA subfamily. As to quaternary structure, homotetramer.

It carries out the reaction 3-oxopropanoate + NAD(+) + CoA + H2O = hydrogencarbonate + acetyl-CoA + NADH + H(+). The catalysed reaction is 2-methyl-3-oxopropanoate + NAD(+) + CoA + H2O = propanoyl-CoA + hydrogencarbonate + NADH + H(+). The protein operates within polyol metabolism; myo-inositol degradation into acetyl-CoA; acetyl-CoA from myo-inositol: step 7/7. Its function is as follows. Catalyzes the oxidation of malonate semialdehyde (MSA) and methylmalonate semialdehyde (MMSA) into acetyl-CoA and propanoyl-CoA, respectively. Is involved in a myo-inositol catabolic pathway. Bicarbonate, and not CO2, is the end-product of the enzymatic reaction. In Shouchella clausii (strain KSM-K16) (Alkalihalobacillus clausii), this protein is Malonate-semialdehyde dehydrogenase 1.